A 441-amino-acid polypeptide reads, in one-letter code: Eukaryotic translation initiation factor 3 subunit M (441 aa).

Residues Glu196–Tyr365 form the PCI domain. Over residues Lys405 to Ser418 the composition is skewed to basic and acidic residues. A disordered region spans residues Lys405–Glu441.

The protein belongs to the eIF-3 subunit M family. Component of the eukaryotic translation initiation factor 3 (eIF-3) complex.

It is found in the cytoplasm. In terms of biological role, component of the eukaryotic translation initiation factor 3 (eIF-3) complex, which is involved in protein synthesis of a specialized repertoire of mRNAs and, together with other initiation factors, stimulates binding of mRNA and methionyl-tRNAi to the 40S ribosome. The eIF-3 complex specifically targets and initiates translation of a subset of mRNAs involved in cell proliferation. In Phaeosphaeria nodorum (strain SN15 / ATCC MYA-4574 / FGSC 10173) (Glume blotch fungus), this protein is Eukaryotic translation initiation factor 3 subunit M.